The primary structure comprises 117 residues: Large ribosomal subunit protein bL20 (117 aa).

It belongs to the bacterial ribosomal protein bL20 family.

Functionally, binds directly to 23S ribosomal RNA and is necessary for the in vitro assembly process of the 50S ribosomal subunit. It is not involved in the protein synthesizing functions of that subunit. The sequence is that of Large ribosomal subunit protein bL20 from Acetivibrio thermocellus (strain ATCC 27405 / DSM 1237 / JCM 9322 / NBRC 103400 / NCIMB 10682 / NRRL B-4536 / VPI 7372) (Clostridium thermocellum).